A 311-amino-acid polypeptide reads, in one-letter code: MALPIMIDCDPGHDDAIALVLALASPELEVKAVTASAGNQTPEKTLRNVLRMLTLLNRPDIPVAGGAWKPLMRDLIIADNVHGESGLDGPSLPEPAFAPQNCTAVELMASVLRESQESVTLVATGPQTNVALLLASHPELHAKIARIVIMGGAMGLGNWQPAAEFNIYVDPQAAEMVFQSGIPVVMAGLDVTHRAQILPADIERFRQIGNPVSTIVAELLDFFMAYHKDEKWGFDGAPLHDPCTIAWLLKPEIFTTIERWVGVETEGKYTQGMTVVDYYHLTGNRPNTTLMLDVDREAFVDLLAQRLAFYA.

Histidine 240 is an active-site residue.

This sequence belongs to the IUNH family. RihA subfamily.

Its function is as follows. Hydrolyzes cytidine or uridine to ribose and cytosine or uracil, respectively. This chain is Pyrimidine-specific ribonucleoside hydrolase RihA, found in Klebsiella pneumoniae subsp. pneumoniae (strain ATCC 700721 / MGH 78578).